The sequence spans 86 residues: BaSO(4)-adsorbing protein 1 (86 aa).

Disulfide bonds link C6–C22, C18–C49, and C39–C54. The tract at residues 58-86 (GDSASNTQNQGGSRRQENEDQGDDEWDRK) is disordered. Positions 59-70 (DSASNTQNQGGS) are enriched in polar residues. A compositionally biased stretch (acidic residues) spans 76–86 (EDQGDDEWDRK).

In terms of tissue distribution, salivary gland (at protein level).

The protein localises to the secreted. In terms of biological role, inhibits lectin and classical pathways of complement system activation in the host with no significant effect on the alternative pathway. Inhibits host extrinsic blood coagulation pathway but not the intrinsic cascade. Binds to neutral and negatively charged membranes in vitro; binding is reduced upon pre-incubation with Ca(2+). This Ornithodoros savignyi (African eyed tampan) protein is BaSO(4)-adsorbing protein 1.